The following is a 160-amino-acid chain: Nucleotide-binding protein CbuK_1936 (160 aa).

The protein belongs to the YajQ family.

Its function is as follows. Nucleotide-binding protein. The sequence is that of Nucleotide-binding protein CbuK_1936 from Coxiella burnetii (strain CbuK_Q154) (Coxiella burnetii (strain Q154)).